Here is a 552-residue protein sequence, read N- to C-terminus: Cilia- and flagella- associated protein 210 (552 aa).

Coiled-coil stretches lie at residues 53–143 (DEWK…NAKQ), 186–307 (EEQL…KKRL), 348–409 (IARD…VMKA), and 460–488 (TEAL…TTNK). The interval 216 to 238 (KDHLKQIKEHEEEEERRKKYEEK) is disordered.

Microtubule inner protein component of sperm flagellar doublet microtubules. As to expression, expressed in airway epithelial cells.

It is found in the cytoplasm. The protein localises to the cytoskeleton. It localises to the cilium axoneme. The protein resides in the flagellum axoneme. In terms of biological role, microtubule inner protein (MIP) part of the dynein-decorated doublet microtubules (DMTs) in cilia axoneme, which is required for motile cilia beating. The polypeptide is Cilia- and flagella- associated protein 210 (Homo sapiens (Human)).